Consider the following 330-residue polypeptide: MVETFYEKDADLGLLKEKTIAVLGYGSQGHAQAQNLKDSGLKVIIGLKKDSKSKETAQRDGFEVYETSEAVKKGDIIQVLIPDEVQSEVYKKDIEPNLDEGNALGFSHGFNIHFGQIVPPKNVDVFMVAPKSPGHLVRRMYLEGKGVPGLLAVHQDFSGKAKELGLSYAKGIGCTRAGVIKTTFKEETETDLFGEQAVLCGGTTSLIKAGFETLVEAGYQPEIAYFECLNELKLIVDLLYEGGLKKMRYSISDTAQYGDITIGPKIIDDRVKETMKDVLANIQNGNFAKDWILENKANRPVFNALTEKDNNSLLEQVGEKLRAMMPWIES.

Residues 2–182 (VETFYEKDAD…GCTRAGVIKT (181 aa)) enclose the KARI N-terminal Rossmann domain. NADP(+) contacts are provided by residues 25 to 28 (YGSQ), Lys48, Ser51, Ser53, and 83 to 86 (DEVQ). His108 is an active-site residue. Gly134 is a binding site for NADP(+). Residues 183–328 (TFKEETETDL…EKLRAMMPWI (146 aa)) form the KARI C-terminal knotted domain. Residues Asp191, Glu195, Glu227, and Glu231 each contribute to the Mg(2+) site. Ser252 provides a ligand contact to substrate.

The protein belongs to the ketol-acid reductoisomerase family. It depends on Mg(2+) as a cofactor.

The enzyme catalyses (2R)-2,3-dihydroxy-3-methylbutanoate + NADP(+) = (2S)-2-acetolactate + NADPH + H(+). It carries out the reaction (2R,3R)-2,3-dihydroxy-3-methylpentanoate + NADP(+) = (S)-2-ethyl-2-hydroxy-3-oxobutanoate + NADPH + H(+). Its pathway is amino-acid biosynthesis; L-isoleucine biosynthesis; L-isoleucine from 2-oxobutanoate: step 2/4. It functions in the pathway amino-acid biosynthesis; L-valine biosynthesis; L-valine from pyruvate: step 2/4. Functionally, involved in the biosynthesis of branched-chain amino acids (BCAA). Catalyzes an alkyl-migration followed by a ketol-acid reduction of (S)-2-acetolactate (S2AL) to yield (R)-2,3-dihydroxy-isovalerate. In the isomerase reaction, S2AL is rearranged via a Mg-dependent methyl migration to produce 3-hydroxy-3-methyl-2-ketobutyrate (HMKB). In the reductase reaction, this 2-ketoacid undergoes a metal-dependent reduction by NADPH to yield (R)-2,3-dihydroxy-isovalerate. The polypeptide is Ketol-acid reductoisomerase (NADP(+)) (Petrotoga mobilis (strain DSM 10674 / SJ95)).